The chain runs to 182 residues: CDP-diacylglycerol--glycerol-3-phosphate 3-phosphatidyltransferase (182 aa).

At 2-12 the chain is on the cytoplasmic side; it reads QFNIPTLLTLF. The chain crosses the membrane as a helical span at residues 13–37; it reads RVILIPFFVLVFYLPVTWSPFAAAL. The Periplasmic segment spans residues 38-60; sequence IFCVAAVTDWFDGFLARRWNQST. Residues 61–81 form a helical membrane-spanning segment; it reads RFGAFLDPVADKVLVAIAMVL. Residues 82 to 86 are Cytoplasmic-facing; sequence VTEHY. Residues 87 to 107 traverse the membrane as a helical segment; it reads HSWWVTLPAATMIAREIIISA. At 108–145 the chain is on the periplasmic side; the sequence is LREWMAELGKRSSVAVSWIGKVKTTAQMVALAWLLWRP. The chain crosses the membrane as a helical span at residues 146–168; that stretch reads NIWVEYVGIALFFVAAVLTLWSM. Over 169–181 the chain is Cytoplasmic; sequence LQYLSAARADLLD.

Belongs to the CDP-alcohol phosphatidyltransferase class-I family.

The protein localises to the cell inner membrane. It catalyses the reaction a CDP-1,2-diacyl-sn-glycerol + sn-glycerol 3-phosphate = a 1,2-diacyl-sn-glycero-3-phospho-(1'-sn-glycero-3'-phosphate) + CMP + H(+). The protein operates within phospholipid metabolism; phosphatidylglycerol biosynthesis; phosphatidylglycerol from CDP-diacylglycerol: step 1/2. Its function is as follows. Catalyzes the conversion of cytidine diphosphate diacylglycerol (CDP-DG) and glycerol 3-phosphate into phosphatidylglycerol. Essential for the synthesis of anionic phospholipids, thereby playing a role in balancing the ratio of zwitterionic and anionic phospholipids, which is thought to be important for normal membrane function. The sequence is that of CDP-diacylglycerol--glycerol-3-phosphate 3-phosphatidyltransferase from Shigella boydii serotype 4 (strain Sb227).